Here is a 148-residue protein sequence, read N- to C-terminus: Flavodoxin (148 aa).

The region spanning 4–145 (VLILFGSSTG…AVSAFAEDVL (142 aa)) is the Flavodoxin-like domain.

It belongs to the flavodoxin family. FMN serves as cofactor.

In terms of biological role, low-potential electron donor to a number of redox enzymes. The chain is Flavodoxin from Desulfovibrio desulfuricans (strain ATCC 27774 / DSM 6949 / MB).